A 167-amino-acid chain; its full sequence is Small ribosomal subunit protein uS5 (167 aa).

The region spanning 12–75 is the S5 DRBM domain; that stretch reads LQEKLIAVNR…EKARRNMTTI (64 aa).

This sequence belongs to the universal ribosomal protein uS5 family. In terms of assembly, part of the 30S ribosomal subunit. Contacts proteins S4 and S8.

With S4 and S12 plays an important role in translational accuracy. Functionally, located at the back of the 30S subunit body where it stabilizes the conformation of the head with respect to the body. The polypeptide is Small ribosomal subunit protein uS5 (Vibrio parahaemolyticus serotype O3:K6 (strain RIMD 2210633)).